The chain runs to 252 residues: ATP synthase subunit a (252 aa).

5 helical membrane passes run 33 to 53, 92 to 112, 130 to 150, 196 to 216, and 217 to 237; these read GQVF…ALAA, VPFV…GALV, DINT…YAGL, LVVG…VMAL, and GLFT…TYIG.

Belongs to the ATPase A chain family. As to quaternary structure, F-type ATPases have 2 components, CF(1) - the catalytic core - and CF(0) - the membrane proton channel. CF(1) has five subunits: alpha(3), beta(3), gamma(1), delta(1), epsilon(1). CF(0) has three main subunits: a(1), b(2) and c(9-12). The alpha and beta chains form an alternating ring which encloses part of the gamma chain. CF(1) is attached to CF(0) by a central stalk formed by the gamma and epsilon chains, while a peripheral stalk is formed by the delta and b chains.

The protein localises to the cellular thylakoid membrane. Functionally, key component of the proton channel; it plays a direct role in the translocation of protons across the membrane. This is ATP synthase subunit a from Synechococcus sp. (strain PCC 6716).